We begin with the raw amino-acid sequence, 56 residues long: Alpha-pompilidotoxin (56 aa).

The N-terminal stretch at 1–22 is a signal peptide; that stretch reads MFKQLILLALAAVFLLINISSA. The propeptide occupies 23-42; sequence EPAAEPNANAEPLAEASAEP. Leu-55 carries the post-translational modification Leucine amide.

Expressed by the venom gland.

The protein localises to the secreted. Functionally, inhibits sodium channels (Nav) inactivation. Shows two types of inhibitory activities on channels. Inhibition of hNav1.6/SCN8A shows a large increase in the steady-state current component without any increase in the slow component, whereas inhibition of hNav1.1/SCN1A, hNav1.2/SCN2A, hNav1.3/SCN3A and hNav1.7/SCN9A shows a large increase in the slow component with only a small steady-state component. Is 5-fold less potent than beta-PMTX for inducing repetitive action potentials in lobster neuromuscular junctions. The polypeptide is Alpha-pompilidotoxin (Anoplius samariensis (Solitary wasp)).